Consider the following 486-residue polypeptide: uncharacterized protein (486 aa).

Positions 1–25 (MGTMRSVYLIIIIILFFAFISLSFG) are cleaved as a signal peptide. Basic and acidic residues-rich tracts occupy residues 306 to 316 (KKEEKENEESS) and 326 to 349 (KKEEKSQTQETKKPSKNEMNKQEK). A disordered region spans residues 306-349 (KKEEKENEESSKTINQMQRHKKEEKSQTQETKKPSKNEMNKQEK).

This is an uncharacterized protein from Methanocaldococcus jannaschii (strain ATCC 43067 / DSM 2661 / JAL-1 / JCM 10045 / NBRC 100440) (Methanococcus jannaschii).